The following is a 78-amino-acid chain: Acyl carrier protein (78 aa).

The Carrier domain occupies 2–77 (SEIASRVKAI…DAVAYIEEHA (76 aa)). An O-(pantetheine 4'-phosphoryl)serine modification is found at serine 37.

This sequence belongs to the acyl carrier protein (ACP) family. 4'-phosphopantetheine is transferred from CoA to a specific serine of apo-ACP by AcpS. This modification is essential for activity because fatty acids are bound in thioester linkage to the sulfhydryl of the prosthetic group.

The protein resides in the cytoplasm. It participates in lipid metabolism; fatty acid biosynthesis. In terms of biological role, carrier of the growing fatty acid chain in fatty acid biosynthesis. The sequence is that of Acyl carrier protein from Bacteroides fragilis (strain ATCC 25285 / DSM 2151 / CCUG 4856 / JCM 11019 / LMG 10263 / NCTC 9343 / Onslow / VPI 2553 / EN-2).